Consider the following 148-residue polypeptide: MAYKHILIAVDLSPESKVLVEKAVSMAKPYNAKVSLIHVDVNYSDLYTGLIDVNLGDMQKRISEETHNALTELSQNAGYPVEQTLSGSGDLGQVLVDAIKKYDIDLVLCGHHQDFWSKLMSSARQLINTVHVDMLIVPLRDDENGEDD.

The protein belongs to the universal stress protein A family. As to quaternary structure, homodimer.

Its subcellular location is the cytoplasm. Its function is as follows. Required for resistance to DNA-damaging agents. The polypeptide is Universal stress protein A (uspA) (Yersinia pestis).